The chain runs to 512 residues: Bifunctional pantoate ligase/cytidylate kinase (512 aa).

The tract at residues methionine 1–arginine 276 is pantoate--beta-alanine ligase. Methionine 27–histidine 34 is an ATP binding site. Histidine 34 functions as the Proton donor in the catalytic mechanism. (R)-pantoate is bound at residue glutamine 58. A beta-alanine-binding site is contributed by glutamine 58. Glycine 147–aspartate 150 provides a ligand contact to ATP. Position 153 (glutamine 153) interacts with (R)-pantoate. ATP-binding positions include leucine 176 and leucine 184 to arginine 187. The cytidylate kinase stretch occupies residues valine 277–alanine 512.

This sequence in the N-terminal section; belongs to the pantothenate synthetase family. In the C-terminal section; belongs to the cytidylate kinase family. Type 1 subfamily.

The protein resides in the cytoplasm. The catalysed reaction is (R)-pantoate + beta-alanine + ATP = (R)-pantothenate + AMP + diphosphate + H(+). It catalyses the reaction CMP + ATP = CDP + ADP. The enzyme catalyses dCMP + ATP = dCDP + ADP. It functions in the pathway cofactor biosynthesis; (R)-pantothenate biosynthesis; (R)-pantothenate from (R)-pantoate and beta-alanine: step 1/1. Functionally, catalyzes the condensation of pantoate with beta-alanine in an ATP-dependent reaction via a pantoyl-adenylate intermediate. Its function is as follows. Catalyzes the transfer of a phosphate group from ATP to either CMP or dCMP to form CDP or dCDP and ADP, respectively. This chain is Bifunctional pantoate ligase/cytidylate kinase, found in Synechococcus sp. (strain RCC307).